Consider the following 210-residue polypeptide: Large ribosomal subunit protein uL3 (210 aa).

A disordered region spans residues 131 to 155 (GPMSHGSKYHRRVGSMSATTDPGRT).

Belongs to the universal ribosomal protein uL3 family. As to quaternary structure, part of the 50S ribosomal subunit. Forms a cluster with proteins L14 and L19.

In terms of biological role, one of the primary rRNA binding proteins, it binds directly near the 3'-end of the 23S rRNA, where it nucleates assembly of the 50S subunit. The polypeptide is Large ribosomal subunit protein uL3 (Thermoanaerobacter sp. (strain X514)).